The following is a 286-amino-acid chain: MRYIRLCIISLLATLPLAVHASPQPLEQIKQSESQLSGSVGMIEMDLASGRTLTAWRADERFPMMSTFKVVLCGAVLARVDAGDEQLERKIHYRQQDLVDYSPVSEKHLADGMTVGELCAAAITMSDNSAANLLLATVGGPAGLTAFLRQIGDNVTRLDRWETELNEALPGDARDTTTPASMAATLRKLLTSQRLSARSQRQLLQWMVDDRVAGPLIRSVLPAGWFIADKTGAAERGARGIVALLGPNNKAERIVVIYLRDTPASMAERNQQIAGIGAALIEHWQR.

An N-terminal signal peptide occupies residues 1–21 (MRYIRLCIISLLATLPLAVHA). Residue serine 66 is the Acyl-ester intermediate of the active site. Cysteine 73 and cysteine 119 form a disulfide bridge. Glutamate 164 (proton acceptor) is an active-site residue. 230–232 (KTG) is a substrate binding site.

It belongs to the class-A beta-lactamase family.

The enzyme catalyses a beta-lactam + H2O = a substituted beta-amino acid. The protein is Beta-lactamase SHV-29 (bla) of Klebsiella pneumoniae.